Here is a 396-residue protein sequence, read N- to C-terminus: Purine ribonucleoside efflux pump NepI (396 aa).

The Cytoplasmic portion of the chain corresponds to 1 to 21; the sequence is MSEFIAENRGADAITRPNWSA. Residues 22–42 traverse the membrane as a helical segment; sequence VFSVAFCVACLIIVEFLPVSL. Over 43 to 54 the chain is Periplasmic; the sequence is LTPMAQDLGISE. A helical transmembrane segment spans residues 55-75; that stretch reads GVAGQSVTVTAFVAMFASLFI. The Cytoplasmic segment spans residues 76 to 85; the sequence is TQTIQATDRR. A helical membrane pass occupies residues 86-106; it reads YVVILFAVLLTLSCLLVSFAN. A topological domain (periplasmic) is located at residue S107. The chain crosses the membrane as a helical span at residues 108–128; the sequence is FSLLLIGRACLGLALGGFWAI. The Cytoplasmic segment spans residues 129 to 147; it reads SASLTMRLVPPRTVPKALS. A helical transmembrane segment spans residues 148–168; sequence VIFGAVSIALVIAAPLGGFLG. Residues 169-175 are Periplasmic-facing; it reads ELIGWRN. The chain crosses the membrane as a helical span at residues 176-196; sequence VFNAAAAMGVLCIFWIIKSLP. Residues 197-215 are Cytoplasmic-facing; the sequence is SLPGEPSHQKQNTFRLLQR. Residues 216 to 236 traverse the membrane as a helical segment; sequence PGVMAGMIAIFMSFAGQFAFF. Topologically, residues 237–255 are periplasmic; it reads TYIRPVYMNLAGFGVDGLT. The chain crosses the membrane as a helical span at residues 256–276; the sequence is LVLLSFGIASFVGTSLSSFIL. The Cytoplasmic segment spans residues 277 to 281; it reads KRSVK. The helical transmembrane segment at 282-302 threads the bilayer; it reads LALAGAPFVLALSALVLTLWG. Residues 303-305 lie on the Periplasmic side of the membrane; the sequence is SDK. The chain crosses the membrane as a helical span at residues 306 to 326; that stretch reads IVATGVAIIWGLTFALIPVGW. Residues 327 to 343 lie on the Cytoplasmic side of the membrane; sequence STWITRSLADQAEKAGS. A helical transmembrane segment spans residues 344–364; the sequence is IQVAVIQLANTCGAAIGGYAL. Residues 365–366 lie on the Periplasmic side of the membrane; sequence DN. The helical transmembrane segment at 367-387 threads the bilayer; that stretch reads IGLTSPLMLSGTLMLLTALLV. Residues 388-396 are Cytoplasmic-facing; it reads TAKVKMKKS.

Belongs to the major facilitator superfamily. DHA1 family. NepI (TC 2.A.1.2.26) subfamily.

The protein resides in the cell inner membrane. The catalysed reaction is inosine(in) + H(+)(out) = inosine(out) + H(+)(in). It carries out the reaction guanosine(in) + H(+)(out) = guanosine(out) + H(+)(in). In terms of biological role, involved in the efflux of purine ribonucleosides, such as inosine and guanosine. The protein is Purine ribonucleoside efflux pump NepI of Escherichia coli O127:H6 (strain E2348/69 / EPEC).